The sequence spans 368 residues: Probable replication factor C subunit 5 (368 aa).

Position 69–76 (69–76 (GPPGTGKT)) interacts with ATP.

It belongs to the activator 1 small subunits family. Heteropentamer of various rfc subunits that forms a complex (RFC) with PCNA in the presence of ATP.

It localises to the nucleus. Its function is as follows. The elongation of primed DNA templates by DNA polymerase delta and epsilon requires the action of the accessory proteins proliferating cell nuclear antigen (PCNA) and activator 1. The chain is Probable replication factor C subunit 5 from Caenorhabditis elegans.